Here is a 1850-residue protein sequence, read N- to C-terminus: Chitin synthase V (1850 aa).

The interval 1-27 (MASTLPPLGGGNGGPHTQHSLPSLPAH) is disordered. In terms of domain architecture, Myosin motor spans 1–779 (MASTLPPLGG…EIAGLVDGSA (779 aa)). ATP is bound at residue 105–112 (GESGSGKS). N245, N290, N427, N481, and N558 each carry an N-linked (GlcNAc...) asparagine glycan. Positions 289–309 (NNTSATGDDSGGFSHEGGQTS) are disordered. The tract at residues 593–647 (SKPMRAPSVMSRKGGRGRGIASQRRQQESNLFDSGNTHAESRSPKGGNKGGIDQG) is disordered. Positions 620–630 (ESNLFDSGNTH) are enriched in polar residues. The actin-binding stretch occupies residues 656 to 680 (LDNVQKAVTDPGTNAYFVFCLKPND). 2 helical membrane-spanning segments follow: residues 884 to 904 (WVFTVYFLTWFIPDFLIRWIG) and 923 to 943 (MLIWFMCLVAAFFIVVFPMLI). A Cytochrome b5 heme-binding domain is found at 947–1006 (QNVFSAAELSSHNGKDGNSAYVSIRGHVIDLGSFADRHYPSFVSRKTMLNYAGMDVSSLF). N-linked (GlcNAc...) asparagine glycosylation is found at N1033, N1058, and N1186. The helical transmembrane segment at 1196-1216 (LVLAVSILLVSVIAFKFFAAL) threads the bilayer. Residues N1453 and N1559 are each glycosylated (N-linked (GlcNAc...) asparagine). The next 4 membrane-spanning stretches (helical) occupy residues 1568–1588 (LIPMAQLCGFCCFSMRFVVFI), 1590–1610 (LLSTVVQPVTIAYIVYLIVLV), 1617–1637 (VPITAFILLGAIYGLQAIIFI), and 1644–1664 (MVGWMILYVMAVPVFSFGLPL). An N-linked (GlcNAc...) asparagine glycan is attached at N1767. The region spanning 1800–1850 (LPSDDALLAEIRDILKTADLMTVTKKGIKQELERRFDVPLDAKRAYINSGK) is the DEK-C domain.

The protein in the N-terminal section; belongs to the TRAFAC class myosin-kinesin ATPase superfamily. Myosin family. This sequence in the C-terminal section; belongs to the chitin synthase family. Class V subfamily. Expressed in conidia and during appressorium formation.

The protein localises to the cell membrane. Its subcellular location is the cell septum. It localises to the cell tip. It catalyses the reaction [(1-&gt;4)-N-acetyl-beta-D-glucosaminyl](n) + UDP-N-acetyl-alpha-D-glucosamine = [(1-&gt;4)-N-acetyl-beta-D-glucosaminyl](n+1) + UDP + H(+). Its function is as follows. Polymerizes chitin, a structural polymer of the cell wall and septum, by transferring the sugar moiety of UDP-GlcNAc to the non-reducing end of the growing chitin polymer. Contributes to the production of conidia and the ability of fungal conidia to germinate. Involved in the fungal cell wall integrity and the ability of conidia to withstand biophysical pressure. Required for appressorium formation and evasion of insect cellular and/or humoral defenses, promoting the fungal dimorphic transition to the production of hyphal bodies that occurs within hosts, and ultimately to virulence. The protein is Chitin synthase V of Metarhizium acridum (strain CQMa 102).